A 363-amino-acid polypeptide reads, in one-letter code: Ribosomal RNA small subunit methyltransferase H (363 aa).

S-adenosyl-L-methionine-binding positions include 55–57 (GGH), D75, D122, and Q129.

This sequence belongs to the methyltransferase superfamily. RsmH family.

The protein localises to the cytoplasm. It carries out the reaction cytidine(1402) in 16S rRNA + S-adenosyl-L-methionine = N(4)-methylcytidine(1402) in 16S rRNA + S-adenosyl-L-homocysteine + H(+). Functionally, specifically methylates the N4 position of cytidine in position 1402 (C1402) of 16S rRNA. In Bordetella petrii (strain ATCC BAA-461 / DSM 12804 / CCUG 43448), this protein is Ribosomal RNA small subunit methyltransferase H.